A 249-amino-acid chain; its full sequence is Probable transcriptional regulatory protein DICTH_1505 (249 aa).

Belongs to the TACO1 family.

It localises to the cytoplasm. This chain is Probable transcriptional regulatory protein DICTH_1505, found in Dictyoglomus thermophilum (strain ATCC 35947 / DSM 3960 / H-6-12).